A 429-amino-acid polypeptide reads, in one-letter code: MRIVHYLNQFFGGIGGEEHAGVRPEVRPGPVGPGMALKAALGDAGEIVATVICGDSWFNENLEEAKATVLALIRQQNPDLVVAGPAFNAGRYGMACGAVAEVVSKELGIPVVTGMFLENPGVEVYRRYAWVVETGNSAASMRTAIPAMAALIRRLAAGQEPEPGTYLERGLRVNTFAAERGSARAVEMLVRKLKGEPYTTEYPMPSFDRVPPNPPVKDLSKAKIALVTSGGIVPKGNPDHIESSSASKYGKYYLGDLDDLTAETHQTAHGGYDPTYANADADRVLPVDVMRELEREGVIGKLHDYWYATVGNGTSVANARAYAREIAEDLKKYEVDAVILTSTUGTCTRCGATMVKEIERAGIPVVHVCTVVPISLTVGANRIVPAVAIPHPLGNPALPPDEERTLRRRLVMKALQALTTPVDGQTVFE.

Residue Sec-344 is part of the active site. Residue Sec-344 is a non-standard amino acid, selenocysteine.

It belongs to the GrdB/GrdF/GrdH family. Heterohexamer of two alpha, two beta and two gamma subunits. Component of the glycine reductase complex, together with components A and C. PB is substrate specific.

It carries out the reaction acetyl phosphate + [thioredoxin]-disulfide + NH4(+) + H2O = [thioredoxin]-dithiol + glycine + phosphate + H(+). In the first step of glycine reductase, the substrate is bound to component PB via a Schiff base intermediate. Then the PB-activated substrate is nucleophilically attacked by the selenol anion of component PA to transform it to a carboxymethylated selenoether and the respective amine. By action of component PC, acetyl phosphate is formed, leaving component PA in its oxidized state. Finally component PA becomes reduced by the thioredoxin system to start a new catalytic cycle of reductive deamination. This chain is Glycine reductase complex component B subunit gamma (grdB), found in Symbiobacterium thermophilum (strain DSM 24528 / JCM 14929 / IAM 14863 / T).